The primary structure comprises 416 residues: Venom allergen 5 (416 aa).

An N-terminal signal peptide occupies residues Met-1–Ser-24. Residues Asp-57 to Asp-217 enclose the SCP domain. Arg-82 is modified (arginine amide; in Cryptide Pep-4).

This sequence belongs to the CRISP family. Venom allergen 5-like subfamily. Contains 9 disulfide bonds. As to expression, expressed by the venom gland.

It localises to the secreted. In terms of biological role, presents weak lactate dehydrogenase (LDH) release from mast cells. Does not induce hemolytic activity, mast cell degranulation, and antimicrobial effects. In vivo, injection into mice causes moderate edema formation, but induces very weak or no change in nociceptive sensibility. It also causes an alteration in rearing (standing on hind limbs), but does not impact locomotion. In Tityus serrulatus (Brazilian scorpion), this protein is Venom allergen 5.